The following is a 415-amino-acid chain: Imidazolonepropionase (415 aa).

2 residues coordinate Fe(3+): His-76 and His-78. Zn(2+) contacts are provided by His-76 and His-78. The 4-imidazolone-5-propanoate site is built by Arg-85, Tyr-148, and His-181. Tyr-148 lines the N-formimidoyl-L-glutamate pocket. Residue His-246 coordinates Fe(3+). Position 246 (His-246) interacts with Zn(2+). Glu-249 serves as a coordination point for 4-imidazolone-5-propanoate. Asp-320 lines the Fe(3+) pocket. Position 320 (Asp-320) interacts with Zn(2+). The N-formimidoyl-L-glutamate site is built by Asn-322 and Gly-324. Residue Thr-325 coordinates 4-imidazolone-5-propanoate.

The protein belongs to the metallo-dependent hydrolases superfamily. HutI family. The cofactor is Zn(2+). Requires Fe(3+) as cofactor.

The protein resides in the cytoplasm. It carries out the reaction 4-imidazolone-5-propanoate + H2O = N-formimidoyl-L-glutamate. The protein operates within amino-acid degradation; L-histidine degradation into L-glutamate; N-formimidoyl-L-glutamate from L-histidine: step 3/3. Its function is as follows. Catalyzes the hydrolytic cleavage of the carbon-nitrogen bond in imidazolone-5-propanoate to yield N-formimidoyl-L-glutamate. It is the third step in the universal histidine degradation pathway. The chain is Imidazolonepropionase from Thermoanaerobacter pseudethanolicus (strain ATCC 33223 / 39E) (Clostridium thermohydrosulfuricum).